The following is a 296-amino-acid chain: UDP-N-acetylenolpyruvoylglucosamine reductase (296 aa).

The FAD-binding PCMH-type domain occupies 26–191; it reads RIGGPANYFK…LSATFRLSRN (166 aa). Arg170 is a catalytic residue. Cys218 functions as the Proton donor in the catalytic mechanism. Residue Glu287 is part of the active site.

The protein belongs to the MurB family. The cofactor is FAD.

It is found in the cytoplasm. It catalyses the reaction UDP-N-acetyl-alpha-D-muramate + NADP(+) = UDP-N-acetyl-3-O-(1-carboxyvinyl)-alpha-D-glucosamine + NADPH + H(+). It participates in cell wall biogenesis; peptidoglycan biosynthesis. Cell wall formation. The sequence is that of UDP-N-acetylenolpyruvoylglucosamine reductase from Chlamydia abortus (strain DSM 27085 / S26/3) (Chlamydophila abortus).